Here is a 341-residue protein sequence, read N- to C-terminus: Methionine import ATP-binding protein MetN 1 (341 aa).

The ABC transporter domain maps to 2–241; sequence IEFRQVSKSF…PKTTIAQNFV (240 aa). 38–45 serves as a coordination point for ATP; that stretch reads GYSGAGKS.

This sequence belongs to the ABC transporter superfamily. Methionine importer (TC 3.A.1.24) family. The complex is composed of two ATP-binding proteins (MetN), two transmembrane proteins (MetI) and a solute-binding protein (MetQ).

Its subcellular location is the cell membrane. The catalysed reaction is L-methionine(out) + ATP + H2O = L-methionine(in) + ADP + phosphate + H(+). It catalyses the reaction D-methionine(out) + ATP + H2O = D-methionine(in) + ADP + phosphate + H(+). Functionally, part of the ABC transporter complex MetNIQ involved in methionine import. Responsible for energy coupling to the transport system. The sequence is that of Methionine import ATP-binding protein MetN 1 from Staphylococcus aureus (strain MRSA252).